The chain runs to 103 residues: Large ribosomal subunit protein bL21 (103 aa).

The protein belongs to the bacterial ribosomal protein bL21 family. As to quaternary structure, part of the 50S ribosomal subunit. Contacts protein L20.

In terms of biological role, this protein binds to 23S rRNA in the presence of protein L20. This chain is Large ribosomal subunit protein bL21, found in Thiobacillus denitrificans (strain ATCC 25259 / T1).